Reading from the N-terminus, the 772-residue chain is Mitochondrial intermediate peptidase (772 aa).

Residues 1 to 37 constitute a mitochondrion transit peptide; the sequence is MLRTIILKAGSNASIPSLSRQNKLLRFFATAGAVSRT. Histidine 558 provides a ligand contact to Zn(2+). Glutamate 559 is an active-site residue. The Zn(2+) site is built by histidine 562 and histidine 565.

Belongs to the peptidase M3 family. It depends on Zn(2+) as a cofactor.

The protein resides in the mitochondrion matrix. The catalysed reaction is Release of an N-terminal octapeptide as second stage of processing of some proteins imported into the mitochondrion.. With respect to regulation, stimulated by Fe(2+). In terms of biological role, cleaves proteins, imported into the mitochondrion, to their mature size. While most mitochondrial precursor proteins are processed to the mature form in one step by mitochondrial processing peptidase (MPP), the sequential cleavage by MIP of an octapeptide after initial processing by MPP is a required step for a subgroup of nuclear-encoded precursor proteins destined for the matrix or the inner membrane. Cleaves precursor proteins of respiratory components, including subunits of the electron transport chain and tricarboxylic acid cycle enzymes, and components of the mitochondrial genetic machinery, including ribosomal proteins, translation factors, and proteins required for mitochondrial DNA metabolism. The chain is Mitochondrial intermediate peptidase (OCT1) from Saccharomyces cerevisiae (strain YJM789) (Baker's yeast).